A 328-amino-acid polypeptide reads, in one-letter code: tRNA dimethylallyltransferase (328 aa).

23–30 (GPTASGKS) contacts ATP. Residue 25–30 (TASGKS) coordinates substrate. The segment at 48 to 51 (DSMQ) is interaction with substrate tRNA.

This sequence belongs to the IPP transferase family. In terms of assembly, monomer. Requires Mg(2+) as cofactor.

The catalysed reaction is adenosine(37) in tRNA + dimethylallyl diphosphate = N(6)-dimethylallyladenosine(37) in tRNA + diphosphate. Functionally, catalyzes the transfer of a dimethylallyl group onto the adenine at position 37 in tRNAs that read codons beginning with uridine, leading to the formation of N6-(dimethylallyl)adenosine (i(6)A). The polypeptide is tRNA dimethylallyltransferase (Rhodopseudomonas palustris (strain BisA53)).